A 376-amino-acid chain; its full sequence is Chaperone protein DnaJ (376 aa).

Residues 5–70 (DYYEVLGVAR…NKRRAYDAHG (66 aa)) form the J domain. The CR-type zinc finger occupies 132 to 209 (GIERRIEIPT…CHGAGRVEEN (78 aa)). 8 residues coordinate Zn(2+): C145, C148, C161, C164, C183, C186, C197, and C200. 4 CXXCXGXG motif repeats span residues 145 to 152 (CVSCHGSG), 161 to 168 (CGTCHGRG), 183 to 190 (CPHCDGRG), and 197 to 204 (CKTCHGAG).

It belongs to the DnaJ family. As to quaternary structure, homodimer. Zn(2+) is required as a cofactor.

It localises to the cytoplasm. In terms of biological role, participates actively in the response to hyperosmotic and heat shock by preventing the aggregation of stress-denatured proteins and by disaggregating proteins, also in an autonomous, DnaK-independent fashion. Unfolded proteins bind initially to DnaJ; upon interaction with the DnaJ-bound protein, DnaK hydrolyzes its bound ATP, resulting in the formation of a stable complex. GrpE releases ADP from DnaK; ATP binding to DnaK triggers the release of the substrate protein, thus completing the reaction cycle. Several rounds of ATP-dependent interactions between DnaJ, DnaK and GrpE are required for fully efficient folding. Also involved, together with DnaK and GrpE, in the DNA replication of plasmids through activation of initiation proteins. The polypeptide is Chaperone protein DnaJ (Xanthomonas oryzae pv. oryzae (strain PXO99A)).